A 244-amino-acid chain; its full sequence is Demethylmenaquinone methyltransferase (244 aa).

Residues threonine 65, aspartate 86, and 114-115 (DA) each bind S-adenosyl-L-methionine.

This sequence belongs to the class I-like SAM-binding methyltransferase superfamily. MenG/UbiE family.

It carries out the reaction a 2-demethylmenaquinol + S-adenosyl-L-methionine = a menaquinol + S-adenosyl-L-homocysteine + H(+). The protein operates within quinol/quinone metabolism; menaquinone biosynthesis; menaquinol from 1,4-dihydroxy-2-naphthoate: step 2/2. Its function is as follows. Methyltransferase required for the conversion of demethylmenaquinol (DMKH2) to menaquinol (MKH2). This is Demethylmenaquinone methyltransferase from Lactobacillus johnsonii (strain CNCM I-12250 / La1 / NCC 533).